Here is a 450-residue protein sequence, read N- to C-terminus: Phosphoglucosamine mutase 2 (450 aa).

Catalysis depends on Ser101, which acts as the Phosphoserine intermediate. Ser101, Asp245, Asp247, and Asp249 together coordinate Mg(2+). Ser101 bears the Phosphoserine mark.

This sequence belongs to the phosphohexose mutase family. Mg(2+) is required as a cofactor. In terms of processing, activated by phosphorylation.

It catalyses the reaction alpha-D-glucosamine 1-phosphate = D-glucosamine 6-phosphate. Functionally, catalyzes the conversion of glucosamine-6-phosphate to glucosamine-1-phosphate. The polypeptide is Phosphoglucosamine mutase 2 (Shewanella frigidimarina (strain NCIMB 400)).